The primary structure comprises 417 residues: Gamma-glutamyl phosphate reductase (417 aa).

It belongs to the gamma-glutamyl phosphate reductase family.

Its subcellular location is the cytoplasm. The enzyme catalyses L-glutamate 5-semialdehyde + phosphate + NADP(+) = L-glutamyl 5-phosphate + NADPH + H(+). It functions in the pathway amino-acid biosynthesis; L-proline biosynthesis; L-glutamate 5-semialdehyde from L-glutamate: step 2/2. In terms of biological role, catalyzes the NADPH-dependent reduction of L-glutamate 5-phosphate into L-glutamate 5-semialdehyde and phosphate. The product spontaneously undergoes cyclization to form 1-pyrroline-5-carboxylate. This chain is Gamma-glutamyl phosphate reductase, found in Heliobacterium modesticaldum (strain ATCC 51547 / Ice1).